The primary structure comprises 1286 residues: Autotransporter adhesin AIDA-I (1286 aa).

The N-terminal stretch at 1-49 is a signal peptide; sequence MNKAYSIIWSHSRQAWIVASELARGHGFVLAKNTLLVLAVVSTIGNAFA. Ser-102, Ser-111, and Ser-116 each carry an O-alpha-linked (glycero-D-manno-heptose) serine glycan. An O-alpha-linked (glycero-D-manno-heptose) threonine glycan is attached at Thr-154. Ser-242, Ser-252, Ser-334, Ser-391, Ser-409, Ser-539, Ser-545, Ser-558, Ser-569, Ser-576, Ser-577, and Ser-582 each carry an O-alpha-linked (glycero-D-manno-heptose) serine glycan. One can recognise an Autotransporter domain in the interval 998-1286; that stretch reads TQPESASVWM…SGALGIKYSF (289 aa). Residues 1006 to 1012 traverse the membrane as a beta stranded segment; the sequence is WMKITGG. Residues 1013–1029 are Extracellular-facing; that stretch reads ISSGKLNDGQNKTTTNQ. The beta stranded transmembrane segment at 1030-1040 threads the bilayer; the sequence is FINQLGGDIYK. Residues 1041 to 1047 are Periplasmic-facing; the sequence is FHAEQLG. The beta stranded transmembrane segment at 1048-1058 threads the bilayer; it reads DFTLGIMGGYA. The Extracellular portion of the chain corresponds to 1059-1079; that stretch reads NAKGKTINYTSNKAARNTLDG. A beta stranded membrane pass occupies residues 1080-1087; that stretch reads YSVGVYGT. At 1088-1097 the chain is on the periplasmic side; sequence WYQNGENATG. Residues 1098-1108 traverse the membrane as a beta stranded segment; the sequence is LFAETWMQYNW. Residues 1109 to 1126 are Extracellular-facing; that stretch reads FNASVKGDGLEEEKYNLN. The beta stranded transmembrane segment at 1127-1138 threads the bilayer; the sequence is GLTASAGGGYNL. Residues 1139-1152 are Periplasmic-facing; sequence NVHTWTSPEGITGE. A beta stranded transmembrane segment spans residues 1153–1164; sequence FWLQPHLQAVWM. The Extracellular segment spans residues 1165–1186; it reads GVTPDTHQEDNGTVVQGAGKNN. A beta stranded transmembrane segment spans residues 1187–1198; sequence IQTKAGIRASWK. Topologically, residues 1199 to 1210 are periplasmic; sequence VKSTLDKDTGRR. Residues 1211–1221 traverse the membrane as a beta stranded segment; the sequence is FRPYIEANWIH. Residues 1222-1242 lie on the Extracellular side of the membrane; the sequence is NTHEFGVKMSDDSQLLSGSRN. The beta stranded transmembrane segment at 1243–1253 threads the bilayer; sequence QGEIKTGIEGV. At 1254-1259 the chain is on the periplasmic side; it reads ITQNLS. A beta stranded membrane pass occupies residues 1260–1267; that stretch reads VNGGVAYQ. Residues 1268 to 1275 lie on the Extracellular side of the membrane; the sequence is AGGHGSNA. Residues 1276–1284 form a beta stranded membrane-spanning segment; it reads ISGALGIKY. Residues 1285 to 1286 lie on the Periplasmic side of the membrane; it reads SF.

Intercellular AIDA-AIDA interaction is responsible for bacterial autoaggregation. AIDA can also interact with antigen 43 (Ag43), and the resultant intercellular AIDA-Ag43 interaction causes cell aggregation. Post-translationally, glycosylated on serine residues by AHH and AAH2 in the cytoplasm. Glycosylated with an average of 19 heptose residues. Glycosylated with either ADP-L, D-heptose or ADP-D, D-heptose. Glycosylation is required for protein folding/stabilization and resistance to protease-mediated degradation. Glycosylation is required for bacteria adhesion to mammalian cells. Glycosylation is dispensable for cell outer membrane localization. Glycosylation is dispensable for AIDA-mediated cell-cell aggregation and induction of biofilm formation. Glycosylation is dispensable for interaction with Ag43.

It localises to the periplasm. The protein localises to the secreted. Its subcellular location is the cell surface. It is found in the cell outer membrane. Potent bacterial adhesin that mediates bacterial attachment to a broad variety of human and other mammalian cells. Has additional virulence properties, as it is capable of mediating bacterial autoaggregation via intercellular self-recognition and it is a highly efficient initiator of biofilm formation. This is Autotransporter adhesin AIDA-I (aidA) from Escherichia coli.